A 232-amino-acid polypeptide reads, in one-letter code: Glycerol-3-phosphate acyltransferase 4 (232 aa).

Transmembrane regions (helical) follow at residues 4–24 (VFLIMIPAGYLVGAIPMAYLL), 54–76 (LGLAVFVFDVSKGAIIILLAGWL), 80–99 (LWQQIVVGLLTIAGHNWPVF), 107–127 (GIATSLGVALVMAPVPALIAL), 143–163 (VFLGVGALPVMSGYFHGFFGV), and 168–188 (TVTWGFAGLFLIMIVRRLMAP).

Belongs to the PlsY family. Probably interacts with PlsX.

It is found in the cell membrane. It catalyses the reaction an acyl phosphate + sn-glycerol 3-phosphate = a 1-acyl-sn-glycero-3-phosphate + phosphate. Its pathway is lipid metabolism; phospholipid metabolism. Functionally, catalyzes the transfer of an acyl group from acyl-phosphate (acyl-PO(4)) to glycerol-3-phosphate (G3P) to form lysophosphatidic acid (LPA). This enzyme utilizes acyl-phosphate as fatty acyl donor, but not acyl-CoA or acyl-ACP. This Dehalococcoides mccartyi (strain CBDB1) protein is Glycerol-3-phosphate acyltransferase 4.